The sequence spans 275 residues: Myoblast determination protein 1 homolog 2 (275 aa).

The region spanning 84–135 (DRRKAATMRERRRLGKVNDAFENLKRCTSNNPNQRLPKVEILRNAISYIESL) is the bHLH domain. The segment covering 232 to 265 (SGQEGSEGSPCSPQEGSILSRNGGTVPSPTNCPQ) has biased composition (polar residues). The segment at 232–275 (SGQEGSEGSPCSPQEGSILSRNGGTVPSPTNCPQPSHDPIYQVL) is disordered.

In terms of assembly, efficient DNA binding requires dimerization with another bHLH protein.

The protein localises to the nucleus. In terms of biological role, may act as a transcriptional activator that promotes transcription of muscle-specific target genes and plays a role in muscle differentiation. This Oncorhynchus mykiss (Rainbow trout) protein is Myoblast determination protein 1 homolog 2 (myod2).